A 398-amino-acid chain; its full sequence is Serpin-Z1C (398 aa).

The RCL stretch occupies residues 343-367 (GTEAAASTAIKMALLQARPPSVMDF).

This sequence belongs to the serpin family.

Its function is as follows. Inhibits chymotrypsin and cathepsin G in vitro. This Triticum aestivum (Wheat) protein is Serpin-Z1C.